The following is an 80-amino-acid chain: Growth factor (80 aa).

A signal peptide spans 1-19 (MATRNLVASLLCIMYAVHA). Positions 29–73 (HVKVCNHDYENYCLNNGTCFTIALDNVSITPFCVCRINYEGSRCQ) constitute an EGF-like domain. 3 disulfide bridges follow: Cys-33-Cys-47, Cys-41-Cys-61, and Cys-63-Cys-72. N-linked (GlcNAc...) asparagine; by host glycans are attached at residues Asn-44 and Asn-54.

Its subcellular location is the secreted. This chain is Growth factor, found in Oryctolagus cuniculus (Rabbit).